Consider the following 199-residue polypeptide: UPF0462 protein C4orf33 (199 aa).

The protein belongs to the UPF0462 family.

The protein is UPF0462 protein C4orf33 (C4orf33) of Homo sapiens (Human).